The chain runs to 978 residues: LRR receptor-like serine/threonine-protein kinase ER1 (978 aa).

Positions 1–24 (MTPAPAAASYRALVALLLVAVAVA) are cleaved as a signal peptide. Topologically, residues 25–577 (DDGSTLLEIK…GHQQKPLISK (553 aa)) are extracellular. N-linked (GlcNAc...) asparagine glycans are attached at residues asparagine 62 and asparagine 71. LRR repeat units lie at residues 66–87 (AVAA…AVGR), 88–112 (LKGI…IGDC), 114–136 (SLKT…VSKL), 137–159 (KHIE…TLSQ), 160–184 (LPNL…IYWN), 186–208 (VLQY…ICQL), 209–232 (TGLW…IGNC), 233–257 (TSFQ…GFLQ), 259–278 (ATLS…VIGL), 279–302 (MQAL…ILGN), 304–327 (TYTE…LGNM), 328–350 (STLH…EFGK), 352–375 (TGLF…ISSC), 377–399 (NLNS…LHKL), 400–423 (ESMT…LSRI), 424–447 (NNLD…IGSL), 449–470 (HLLR…EIGN), 471–494 (LRSI…ELGM), 496–518 (QNLM…LMNC), and 519–543 (FSLN…NFSR). Residues asparagine 218 and asparagine 231 are each glycosylated (N-linked (GlcNAc...) asparagine). 2 N-linked (GlcNAc...) asparagine glycosylation sites follow: asparagine 302 and asparagine 326. Asparagine 371, asparagine 389, and asparagine 406 each carry an N-linked (GlcNAc...) asparagine glycan. N-linked (GlcNAc...) asparagine glycosylation is present at asparagine 454. N-linked (GlcNAc...) asparagine glycosylation is found at asparagine 507, asparagine 525, and asparagine 540. The helical transmembrane segment at 578-598 (AAILGIAVGGLVILLMILVAV) threads the bilayer. Over 599-978 (CRPHSPPVFK…FGEVISQNTE (380 aa)) the chain is Cytoplasmic. The Protein kinase domain occupies 645–916 (LSEKYIIGYG…EVVRVLDCLV (272 aa)). Residues 651–659 (IGYGASSTV) and lysine 673 each bind ATP. Aspartate 771 (proton acceptor) is an active-site residue.

The protein belongs to the protein kinase superfamily. Ser/Thr protein kinase family.

The protein resides in the cell membrane. It catalyses the reaction L-seryl-[protein] + ATP = O-phospho-L-seryl-[protein] + ADP + H(+). The enzyme catalyses L-threonyl-[protein] + ATP = O-phospho-L-threonyl-[protein] + ADP + H(+). In terms of biological role, receptor kinase involved in the regulation of thermotolerance. Functions as a positive regulator of heat tolerance. May be involved in the regulation of cell proliferation and cell growth. The protein is LRR receptor-like serine/threonine-protein kinase ER1 of Oryza sativa subsp. japonica (Rice).